We begin with the raw amino-acid sequence, 259 residues long: Small ribosomal subunit protein eS1 (259 aa).

Disordered stretches follow at residues 1–23 (MAVG…KTAD) and 235–259 (ESKS…VDSV). The segment covering 8–19 (KVTKGGKKGGKK) has biased composition (basic residues). Residues 246-259 (SRPDHYEPPKVDSV) show a composition bias toward basic and acidic residues.

It belongs to the eukaryotic ribosomal protein eS1 family. As to quaternary structure, component of the small ribosomal subunit. Mature ribosomes consist of a small (40S) and a large (60S) subunit. The 40S subunit contains about 33 different proteins and 1 molecule of RNA (18S). The 60S subunit contains about 49 different proteins and 3 molecules of RNA (28S, 5.8S and 5S).

Its subcellular location is the cytoplasm. The sequence is that of Small ribosomal subunit protein eS1 from Schistosoma japonicum (Blood fluke).